The chain runs to 75 residues: Pi-hexatoxin-Hi1d (75 aa).

6 cysteine pairs are disulfide-bonded: Cys3–Cys18, Cys10–Cys23, Cys17–Cys33, Cys40–Cys55, Cys47–Cys60, and Cys54–Cys71. Domain repeat units lie at residues Cys3 to Cys33 and Cys40 to Cys71. The interval Cys3–Cys71 is 2 X approximate repeats with cysteine pattern C-C-CC-C-C.

This sequence belongs to the psalmotoxin-1 family. Double-knot toxin subfamily. As to expression, expressed by the venom gland.

It is found in the secreted. Functionally, this toxin potently and selectively inhibits ASIC1a, an isoform of the gene ASIC1. It incompletely inhibits ASIC1a activation in a pH-independent and slowly reversible manner. This toxin acts by binding to and stabilizing the closed state of the channel, thereby impeding the transition into a conducting state. This toxin may bind to the acidic pocket of ASIC1a, since mutation of a key residue of this pocket (Arg-350) abolishes the ability of the toxin to inhibit ASIC1a. In vivo, this toxin protects the brain from neuronal injury when administered up to 8 hours after stroke onset. In Hadronyche infensa (Fraser island funnel-web spider), this protein is Pi-hexatoxin-Hi1d.